The chain runs to 48 residues: Large ribosomal subunit protein bL34 (48 aa).

It belongs to the bacterial ribosomal protein bL34 family.

The polypeptide is Large ribosomal subunit protein bL34 (rpmH) (Mycoplasma pneumoniae (strain ATCC 29342 / M129 / Subtype 1) (Mycoplasmoides pneumoniae)).